The sequence spans 301 residues: Probable alpha-L-glutamate ligase (301 aa).

Residues 104–287 (LQLLSRKGIG…VAGLIYEFIE (184 aa)) enclose the ATP-grasp domain. ATP is bound by residues Lys141, 178–179 (EF), Asp187, and 211–213 (RSN). 3 residues coordinate Mg(2+): Asp248, Glu260, and Asn262. Residues Asp248, Glu260, and Asn262 each coordinate Mn(2+).

The protein belongs to the RimK family. Mg(2+) serves as cofactor. The cofactor is Mn(2+).

This Shewanella loihica (strain ATCC BAA-1088 / PV-4) protein is Probable alpha-L-glutamate ligase.